A 350-amino-acid polypeptide reads, in one-letter code: MFIKGRAPRAPPRERRRATRGGLRQVVAPPRALGSTSRPHFRRASVCRRRCRKSGGLLAASRKMAAAAVNGAAGFSSSGPAATSGAVLQAATGMYEQLKGEWNRKSPNLSKCGEELGRLKLVLLELNFLPTTGTKLTKQQLILARDILEIGAQWSILRKDIPSFERYMAQLKCYYFDYKEQLPESAYMHQLLGLNLLFLLSQNRVAEFHTELERLPAKDIQTNVYIKHPVSLEQYLMEGSYNKVFLAKGNIPAESYTFFIDILLDTIRDEIAGCIEKAYEKILFTEATRILFFNTPKKMTDYAKKRGWVLGPNNYYSFASQQQKPEDTTIPSTELAKQVIEYARQLEMIV.

Residues 1 to 24 (MFIKGRAPRAPPRERRRATRGGLR) are disordered. At Ser106 the chain carries Phosphoserine. The PCI domain occupies 162–331 (PSFERYMAQL…QQKPEDTTIP (170 aa)). Lys297 participates in a covalent cross-link: Glycyl lysine isopeptide (Lys-Gly) (interchain with G-Cter in SUMO2).

Belongs to the proteasome subunit S14 family. Component of the 19S proteasome regulatory particle complex. The 26S proteasome consists of a 20S core particle (CP) and two 19S regulatory subunits (RP). The regulatory particle is made of a lid composed of 9 subunits including PSMD8, a base containing 6 ATPases and few additional components. Interacts with DDI2. Interacts with TASOR.

In terms of biological role, component of the 26S proteasome, a multiprotein complex involved in the ATP-dependent degradation of ubiquitinated proteins. This complex plays a key role in the maintenance of protein homeostasis by removing misfolded or damaged proteins, which could impair cellular functions, and by removing proteins whose functions are no longer required. Therefore, the proteasome participates in numerous cellular processes, including cell cycle progression, apoptosis, or DNA damage repair. This chain is 26S proteasome non-ATPase regulatory subunit 8 (PSMD8), found in Homo sapiens (Human).